We begin with the raw amino-acid sequence, 213 residues long: Kynurenine formamidase (213 aa).

Residue W20 coordinates substrate. Residues H50, H54, and D56 each contribute to the Zn(2+) site. The active-site Proton donor/acceptor is H60. Zn(2+)-binding residues include H161 and E173.

It belongs to the Cyclase 1 superfamily. KynB family. Homodimer. The cofactor is Zn(2+).

It catalyses the reaction N-formyl-L-kynurenine + H2O = L-kynurenine + formate + H(+). Its pathway is amino-acid degradation; L-tryptophan degradation via kynurenine pathway; L-kynurenine from L-tryptophan: step 2/2. Functionally, catalyzes the hydrolysis of N-formyl-L-kynurenine to L-kynurenine, the second step in the kynurenine pathway of tryptophan degradation. This is Kynurenine formamidase from Pseudomonas paraeruginosa (strain DSM 24068 / PA7) (Pseudomonas aeruginosa (strain PA7)).